The sequence spans 337 residues: D-alanine--D-alanine ligase (337 aa).

Positions 124-330 (KMWFSALGIP…FTEYLSLVIN (207 aa)) constitute an ATP-grasp domain. ATP is bound at residue 154–209 (ALAQWGSIFVKAASQGSSVGCYKVDDSAKVAGVLKDAFGYAPYVIVEKTIKARELE). Residues Asp284, Glu297, and Asn299 each coordinate Mg(2+).

Belongs to the D-alanine--D-alanine ligase family. Mg(2+) serves as cofactor. Requires Mn(2+) as cofactor.

It is found in the cytoplasm. The enzyme catalyses 2 D-alanine + ATP = D-alanyl-D-alanine + ADP + phosphate + H(+). Its pathway is cell wall biogenesis; peptidoglycan biosynthesis. Its function is as follows. Cell wall formation. The polypeptide is D-alanine--D-alanine ligase (Shewanella baltica (strain OS185)).